The chain runs to 66 residues: Phylloseptin-B1 (66 aa).

The first 22 residues, 1–22, serve as a signal peptide directing secretion; the sequence is MAFLKKSLFLVLFLGLVSLSIC. Positions 23 to 46 are excised as a propeptide; the sequence is EEEKRETEEKEYDQGEDDKSEEKR. L65 is subject to Leucine amide.

Belongs to the frog skin active peptide (FSAP) family. Phylloseptin subfamily. Expressed by the skin glands.

It is found in the secreted. The protein localises to the target cell membrane. In terms of biological role, antimicrobial peptide with activity against only a few strains of Gram-positive bacteria (S.aureus and B.megaterium). Acts in a synergistic effect in combination with Plasticin-B1 at doses that are not active alone. This Phyllomedusa bicolor (Two-colored leaf frog) protein is Phylloseptin-B1.